Consider the following 597-residue polypeptide: DNA mismatch repair protein MutL (597 aa).

Belongs to the DNA mismatch repair MutL/HexB family.

In terms of biological role, this protein is involved in the repair of mismatches in DNA. It is required for dam-dependent methyl-directed DNA mismatch repair. May act as a 'molecular matchmaker', a protein that promotes the formation of a stable complex between two or more DNA-binding proteins in an ATP-dependent manner without itself being part of a final effector complex. The polypeptide is DNA mismatch repair protein MutL (Rhodopseudomonas palustris (strain HaA2)).